Here is a 353-residue protein sequence, read N- to C-terminus: Major outer membrane protein (353 aa).

The N-terminal stretch at 1–20 (MKKTIVALAVAAVAATSANA) is a signal peptide.

In terms of assembly, disulfide bond interactions within and between MOMP molecules and other components form high molecular-weight oligomers.

The protein resides in the cell outer membrane. Its function is as follows. Structural rigidity of the outer membrane of elementary bodies and porin forming, permitting diffusion of solutes through the intracellular reticulate body membrane. The sequence is that of Major outer membrane protein (ompH) from Pasteurella multocida.